The chain runs to 447 residues: MVRKYFGTDGIRGRANGVITPELALKVGQAAGLVFQRGDHRHRVVIGKDTRLSGYMIETALVAGFTSVGMDVLLLGPVPTPAVAMLTRSMRADLGVMISASHNPFEDNGIKLFGPDGFKLNDAIEHEIEGLIDADMHKRLSGSNDLGRAKRIESVHARYIEFAKRTLPRQVTLDGLRVVVDCANGAAYRVAPETLWELGAEVIAIGTEPDGFNINRDVGSTAPAALIDMVRERRADIGIALDGDADRVLIVDEKGQVVDGDQLMAVVARSWKEDERLTQPGVVATIMSNLGLERFLGGLGLSLARTAVGDRYVLEHMRAHGYNLGGEQSGHIIMSDYTTTGDGLVAALQLLSVVQRQNRPVSEVCHCFDPLPQILKNVRYRSGEPLREDSVVSAIEHARERLGNAGRLVIRPSGTEPVIRVMAEGDDRGLVNAVVDEVVDAVTRAAA.

Serine 101 acts as the Phosphoserine intermediate in catalysis. 4 residues coordinate Mg(2+): serine 101, aspartate 242, aspartate 244, and aspartate 246. Position 101 is a phosphoserine (serine 101).

This sequence belongs to the phosphohexose mutase family. Mg(2+) is required as a cofactor. In terms of processing, activated by phosphorylation.

It catalyses the reaction alpha-D-glucosamine 1-phosphate = D-glucosamine 6-phosphate. In terms of biological role, catalyzes the conversion of glucosamine-6-phosphate to glucosamine-1-phosphate. The polypeptide is Phosphoglucosamine mutase (Methylobacterium radiotolerans (strain ATCC 27329 / DSM 1819 / JCM 2831 / NBRC 15690 / NCIMB 10815 / 0-1)).